The primary structure comprises 194 residues: Pyridoxal 5'-phosphate synthase subunit PdxT (194 aa).

54 to 56 provides a ligand contact to L-glutamine; the sequence is GES. The active-site Nucleophile is Cys83. Residues Arg110 and 139-140 contribute to the L-glutamine site; that span reads IR. Residues His175 and Glu177 each act as charge relay system in the active site.

This sequence belongs to the glutaminase PdxT/SNO family. In the presence of PdxS, forms a dodecamer of heterodimers. Only shows activity in the heterodimer.

It catalyses the reaction aldehydo-D-ribose 5-phosphate + D-glyceraldehyde 3-phosphate + L-glutamine = pyridoxal 5'-phosphate + L-glutamate + phosphate + 3 H2O + H(+). It carries out the reaction L-glutamine + H2O = L-glutamate + NH4(+). It functions in the pathway cofactor biosynthesis; pyridoxal 5'-phosphate biosynthesis. Its function is as follows. Catalyzes the hydrolysis of glutamine to glutamate and ammonia as part of the biosynthesis of pyridoxal 5'-phosphate. The resulting ammonia molecule is channeled to the active site of PdxS. The sequence is that of Pyridoxal 5'-phosphate synthase subunit PdxT from Methanoregula boonei (strain DSM 21154 / JCM 14090 / 6A8).